A 70-amino-acid polypeptide reads, in one-letter code: NADH dehydrogenase [ubiquinone] 1 alpha subcomplex subunit 1 (70 aa).

A helical membrane pass occupies residues 1–21 (MWFEILPGLAVMGVCLVIPGV).

Belongs to the complex I NDUFA1 subunit family. In terms of assembly, complex I is composed of 45 different subunits.

It is found in the mitochondrion inner membrane. Accessory subunit of the mitochondrial membrane respiratory chain NADH dehydrogenase (Complex I), that is believed not to be involved in catalysis. Complex I functions in the transfer of electrons from NADH to the respiratory chain. The immediate electron acceptor for the enzyme is believed to be ubiquinone. The polypeptide is NADH dehydrogenase [ubiquinone] 1 alpha subcomplex subunit 1 (NDUFA1) (Cricetulus griseus (Chinese hamster)).